A 320-amino-acid chain; its full sequence is Ribonuclease Z (320 aa).

Zn(2+) is bound by residues histidine 63, histidine 65, aspartate 67, histidine 68, histidine 141, aspartate 212, and histidine 270. Aspartate 67 functions as the Proton acceptor in the catalytic mechanism.

This sequence belongs to the RNase Z family. In terms of assembly, homodimer. Zn(2+) serves as cofactor.

It carries out the reaction Endonucleolytic cleavage of RNA, removing extra 3' nucleotides from tRNA precursor, generating 3' termini of tRNAs. A 3'-hydroxy group is left at the tRNA terminus and a 5'-phosphoryl group is left at the trailer molecule.. Functionally, zinc phosphodiesterase, which displays some tRNA 3'-processing endonuclease activity. Probably involved in tRNA maturation, by removing a 3'-trailer from precursor tRNA. This Lacticaseibacillus casei (strain BL23) (Lactobacillus casei) protein is Ribonuclease Z.